A 329-amino-acid polypeptide reads, in one-letter code: MASQLTDAFARKYYYLRLSITDVCNFRCTYCLPDGYKPSGVTNKGFLTVDEIRRVTRAFASLGTEKVRLTGGEPSLRRDFTDIIAAVRENDAIRQIAVTTNGYRLERDVANWRDAGLTGINVSVDSLDARQFHAITGQDKFNQVMAGIDAAFEAGFEKVKVNTVLMRDVNHHQLDTFLNWIQHRPIQLRFIELMETGEGSELFRKHHISGQVLRDELLRRGWIHQLRQRSDGPAQVFCHPDYAGEIGLIMPYEKDFCATCNRLRVSSIGKLHLCLFGEGGVNLRDLLEDDTQQQALEARISAALREKKQTHFLHQNNTGITQNLSYIGG.

One can recognise a Radical SAM core domain in the interval 8 to 234 (AFARKYYYLR…QLRQRSDGPA (227 aa)). Arginine 17 serves as a coordination point for GTP. Residues cysteine 24 and cysteine 28 each contribute to the [4Fe-4S] cluster site. Residue tyrosine 30 coordinates S-adenosyl-L-methionine. Residue cysteine 31 participates in [4Fe-4S] cluster binding. Arginine 68 serves as a coordination point for GTP. Glycine 72 provides a ligand contact to S-adenosyl-L-methionine. Threonine 99 provides a ligand contact to GTP. Serine 123 lines the S-adenosyl-L-methionine pocket. Lysine 160 contributes to the GTP binding site. Residue methionine 194 coordinates S-adenosyl-L-methionine. [4Fe-4S] cluster is bound by residues cysteine 257 and cysteine 260. Residue 262-264 (RLR) participates in GTP binding. Cysteine 274 is a [4Fe-4S] cluster binding site.

Belongs to the radical SAM superfamily. MoaA family. In terms of assembly, monomer and homodimer. [4Fe-4S] cluster is required as a cofactor.

It carries out the reaction GTP + AH2 + S-adenosyl-L-methionine = (8S)-3',8-cyclo-7,8-dihydroguanosine 5'-triphosphate + 5'-deoxyadenosine + L-methionine + A + H(+). Its pathway is cofactor biosynthesis; molybdopterin biosynthesis. In terms of biological role, catalyzes the cyclization of GTP to (8S)-3',8-cyclo-7,8-dihydroguanosine 5'-triphosphate. This is GTP 3',8-cyclase from Escherichia coli O17:K52:H18 (strain UMN026 / ExPEC).